Consider the following 388-residue polypeptide: Chorismate synthase (388 aa).

Residues Arg39 and Arg45 each contribute to the NADP(+) site. Residues 130 to 132, 251 to 252, Gly296, 311 to 315, and Arg337 contribute to the FMN site; these read RSS, NA, and KPIPT.

It belongs to the chorismate synthase family. As to quaternary structure, homotetramer. Requires FMNH2 as cofactor.

It carries out the reaction 5-O-(1-carboxyvinyl)-3-phosphoshikimate = chorismate + phosphate. It participates in metabolic intermediate biosynthesis; chorismate biosynthesis; chorismate from D-erythrose 4-phosphate and phosphoenolpyruvate: step 7/7. Functionally, catalyzes the anti-1,4-elimination of the C-3 phosphate and the C-6 proR hydrogen from 5-enolpyruvylshikimate-3-phosphate (EPSP) to yield chorismate, which is the branch point compound that serves as the starting substrate for the three terminal pathways of aromatic amino acid biosynthesis. This reaction introduces a second double bond into the aromatic ring system. The chain is Chorismate synthase from Streptococcus pneumoniae serotype 19F (strain G54).